A 170-amino-acid chain; its full sequence is Co-chaperone protein HscB homolog (170 aa).

In terms of domain architecture, J spans 5-79 (DHFSLFGLPA…RARYLCEQAG (75 aa)).

The protein belongs to the HscB family. Interacts with HscA and stimulates its ATPase activity.

Functionally, co-chaperone involved in the maturation of iron-sulfur cluster-containing proteins. Seems to help targeting proteins to be folded toward HscA. The sequence is that of Co-chaperone protein HscB homolog from Bordetella parapertussis (strain 12822 / ATCC BAA-587 / NCTC 13253).